The primary structure comprises 298 residues: Protoheme IX farnesyltransferase (298 aa).

9 consecutive transmembrane segments (helical) span residues 26–46, 52–72, 93–113, 120–140, 148–168, 174–194, 219–239, 241–261, and 278–298; these read VVSL…PGAV, LLGT…NCLV, VSVP…LFIL, LTMW…TVIL, IVIG…AITG, ALLL…ALAL, LHVL…YLTQ, SGLI…YYAI, and YSII…YFYF.

This sequence belongs to the UbiA prenyltransferase family. Protoheme IX farnesyltransferase subfamily.

Its subcellular location is the cell inner membrane. It carries out the reaction heme b + (2E,6E)-farnesyl diphosphate + H2O = Fe(II)-heme o + diphosphate. Its pathway is porphyrin-containing compound metabolism; heme O biosynthesis; heme O from protoheme: step 1/1. In terms of biological role, converts heme B (protoheme IX) to heme O by substitution of the vinyl group on carbon 2 of heme B porphyrin ring with a hydroxyethyl farnesyl side group. The chain is Protoheme IX farnesyltransferase from Nitrosomonas eutropha (strain DSM 101675 / C91 / Nm57).